The following is a 178-amino-acid chain: Enhancer of split m5 protein (178 aa).

A bHLH domain is found at 18–73 (YLKVKKPLLERQRRARMNKCLDTLKTLVAEFQGDDAILRMDKAEMLEAALVFMRKQ). Residues 89-122 (FKNGYMNAVSEISRVMACTPAMSVDVGKTVMTHL) form the Orange domain. Over residues 135-165 (VQTSVTTSTPRPLSPASSGYHSDNEDSQSAA) the composition is skewed to polar residues. Residues 135–178 (VQTSVTTSTPRPLSPASSGYHSDNEDSQSAASPKPVEETMWRPW) form a disordered region. A compositionally biased stretch (basic and acidic residues) spans 169–178 (PVEETMWRPW). The WRPW motif motif lies at 175–178 (WRPW).

As to quaternary structure, transcription repression requires formation of a complex with a corepressor protein (Groucho). Forms homodimers.

The protein resides in the nucleus. Participates in the control of cell fate choice by uncommitted neuroectodermal cells in the embryo. Transcriptional repressor. Binds DNA on N-box motifs: 5'-CACNAG-3'. The protein is Enhancer of split m5 protein of Drosophila melanogaster (Fruit fly).